We begin with the raw amino-acid sequence, 589 residues long: UvrABC system protein C (589 aa).

In terms of domain architecture, GIY-YIG spans histidine 14–methionine 91.

This sequence belongs to the UvrC family. In terms of assembly, interacts with UvrB in an incision complex.

It localises to the cytoplasm. The UvrABC repair system catalyzes the recognition and processing of DNA lesions. UvrC both incises the 5' and 3' sides of the lesion. The N-terminal half is responsible for the 3' incision and the C-terminal half is responsible for the 5' incision. The polypeptide is UvrABC system protein C (Malacoplasma penetrans (strain HF-2) (Mycoplasma penetrans)).